We begin with the raw amino-acid sequence, 337 residues long: Monoacylglycerol lipase ABHD6 (337 aa).

The Extracellular portion of the chain corresponds to 1-19 (MDLDVVNMFVIAGGTLALP). Residues 20 to 42 (ILAFVASFLLWPSALIRIYYWYW) traverse the membrane as a helical; Signal-anchor for type II membrane protein segment. Residues 43-337 (RRTLGMQVRY…HSTDNSKKLD (295 aa)) are Cytoplasmic-facing. The region spanning 72–313 (PSILMLHGFS…CGHSVVMERP (242 aa)) is the AB hydrolase-1 domain. The active-site Nucleophile is the Ser148. Residues Asp278 and His306 each act as charge relay system in the active site.

It belongs to the AB hydrolase superfamily.

The protein resides in the late endosome membrane. Its subcellular location is the lysosome membrane. The protein localises to the mitochondrion membrane. It catalyses the reaction Hydrolyzes glycerol monoesters of long-chain fatty acids.. The enzyme catalyses 1-octanoylglycerol + H2O = octanoate + glycerol + H(+). The catalysed reaction is 1-decanoylglycerol + H2O = decanoate + glycerol + H(+). It carries out the reaction 1-dodecanoylglycerol + H2O = dodecanoate + glycerol + H(+). It catalyses the reaction 1-tetradecanoylglycerol + H2O = tetradecanoate + glycerol + H(+). The enzyme catalyses 2-hexadecanoylglycerol + H2O = glycerol + hexadecanoate + H(+). The catalysed reaction is 2-(9Z-octadecenoyl)-glycerol + H2O = glycerol + (9Z)-octadecenoate + H(+). It carries out the reaction 1-(9Z-octadecenoyl)-glycerol + H2O = glycerol + (9Z)-octadecenoate + H(+). It catalyses the reaction 2-(9Z,12Z-octadecadienoyl)-glycerol + H2O = (9Z,12Z)-octadecadienoate + glycerol + H(+). The enzyme catalyses 2-(5Z,8Z,11Z,14Z-eicosatetraenoyl)-glycerol + H2O = glycerol + (5Z,8Z,11Z,14Z)-eicosatetraenoate + H(+). The catalysed reaction is 1-(5Z,8Z,11Z,14Z-eicosatetraenoyl)-glycerol + H2O = glycerol + (5Z,8Z,11Z,14Z)-eicosatetraenoate + H(+). It carries out the reaction 1-(9Z,12Z-octadecadienoyl)-glycerol + H2O = (9Z,12Z)-octadecadienoate + glycerol + H(+). It catalyses the reaction 3-(9Z-octadecenoyl)-sn-glycero-1-phospho-(3'-(9Z-octadecenoyl)-1'-sn-glycerol) + H2O = 3-(9Z-octadecenoyl)-sn-glycero-1-phospho-(1'-sn-glycerol) + (9Z)-octadecenoate + H(+). The enzyme catalyses (S,S)-2-(9Z-octadecenoyl)-sn-glycero-1-phospho-(2'-(9Z-octadecenoyl)-1'-sn-glycerol) + H2O = (S,S)-2-(9Z-octadecenoyl)-sn-glycero-1-phospho-(1'-sn-glycerol) + (9Z)-octadecenoate + H(+). The catalysed reaction is (R,R)-2-(9Z-octadecenoyl)-sn-glycero-3-phospho-(2'-(9Z-octadecenoyl)-3'-sn-glycerol) + H2O = (R,R)-2-(9Z-octadecenoyl)-sn-glycero-3-phospho-(3'-sn-glycerol) + (9Z)-octadecenoate + H(+). Lipase that preferentially hydrolysis medium-chain saturated monoacylglycerols including 2-arachidonoylglycerol. Through 2-arachidonoylglycerol degradation may regulate endocannabinoid signaling pathways. Also has a lysophosphatidyl lipase activity with a preference for lysophosphatidylglycerol among other lysophospholipids. Also able to degrade bis(monoacylglycero)phosphate (BMP) and constitutes the major enzyme for BMP catabolism. BMP, also known as lysobisphosphatidic acid, is enriched in late endosomes and lysosomes and plays a key role in the formation of intraluminal vesicles and in lipid sorting. The chain is Monoacylglycerol lipase ABHD6 from Bos taurus (Bovine).